Consider the following 168-residue polypeptide: Crossover junction endodeoxyribonuclease RuvC (168 aa).

Active-site residues include Asp7, Glu66, and Asp138. Residues Asp7, Glu66, and Asp138 each coordinate Mg(2+).

The protein belongs to the RuvC family. In terms of assembly, homodimer which binds Holliday junction (HJ) DNA. The HJ becomes 2-fold symmetrical on binding to RuvC with unstacked arms; it has a different conformation from HJ DNA in complex with RuvA. In the full resolvosome a probable DNA-RuvA(4)-RuvB(12)-RuvC(2) complex forms which resolves the HJ. Mg(2+) is required as a cofactor.

The protein localises to the cytoplasm. The enzyme catalyses Endonucleolytic cleavage at a junction such as a reciprocal single-stranded crossover between two homologous DNA duplexes (Holliday junction).. In terms of biological role, the RuvA-RuvB-RuvC complex processes Holliday junction (HJ) DNA during genetic recombination and DNA repair. Endonuclease that resolves HJ intermediates. Cleaves cruciform DNA by making single-stranded nicks across the HJ at symmetrical positions within the homologous arms, yielding a 5'-phosphate and a 3'-hydroxyl group; requires a central core of homology in the junction. The consensus cleavage sequence is 5'-(A/T)TT(C/G)-3'. Cleavage occurs on the 3'-side of the TT dinucleotide at the point of strand exchange. HJ branch migration catalyzed by RuvA-RuvB allows RuvC to scan DNA until it finds its consensus sequence, where it cleaves and resolves the cruciform DNA. In Cereibacter sphaeroides (strain ATCC 17023 / DSM 158 / JCM 6121 / CCUG 31486 / LMG 2827 / NBRC 12203 / NCIMB 8253 / ATH 2.4.1.) (Rhodobacter sphaeroides), this protein is Crossover junction endodeoxyribonuclease RuvC.